We begin with the raw amino-acid sequence, 93 residues long: Bombyxin B-11 (93 aa).

The first 22 residues, 1-22, serve as a signal peptide directing secretion; sequence MMKTAVMFILVVVISLTYSSEE. Intrachain disulfides connect cysteine 30–cysteine 75, cysteine 42–cysteine 92, and cysteine 74–cysteine 79. Positions 49 to 64 are cleaved as a propeptide — bombyxin B-11 C peptide; sequence GGAQYAPYWQETYLRS.

It belongs to the insulin family. In terms of assembly, heterodimer of a B chain and an A chain linked by two disulfide bonds.

The protein localises to the secreted. Brain peptide responsible for activation of prothoracic glands to produce ecdysone in insects. The protein is Bombyxin B-11 (BBXB11) of Bombyx mori (Silk moth).